The primary structure comprises 186 residues: Ribosome-recycling factor (186 aa).

It belongs to the RRF family.

It is found in the cytoplasm. Its function is as follows. Responsible for the release of ribosomes from messenger RNA at the termination of protein biosynthesis. May increase the efficiency of translation by recycling ribosomes from one round of translation to another. This Polaromonas naphthalenivorans (strain CJ2) protein is Ribosome-recycling factor.